A 360-amino-acid chain; its full sequence is UDP-N-acetylglucosamine--N-acetylmuramyl-(pentapeptide) pyrophosphoryl-undecaprenol N-acetylglucosamine transferase (360 aa).

Residues 12–14 (TGG), Asn124, Arg161, Ser189, Ile243, and Gln288 contribute to the UDP-N-acetyl-alpha-D-glucosamine site.

This sequence belongs to the glycosyltransferase 28 family. MurG subfamily.

It localises to the cell inner membrane. It carries out the reaction di-trans,octa-cis-undecaprenyl diphospho-N-acetyl-alpha-D-muramoyl-L-alanyl-D-glutamyl-meso-2,6-diaminopimeloyl-D-alanyl-D-alanine + UDP-N-acetyl-alpha-D-glucosamine = di-trans,octa-cis-undecaprenyl diphospho-[N-acetyl-alpha-D-glucosaminyl-(1-&gt;4)]-N-acetyl-alpha-D-muramoyl-L-alanyl-D-glutamyl-meso-2,6-diaminopimeloyl-D-alanyl-D-alanine + UDP + H(+). It participates in cell wall biogenesis; peptidoglycan biosynthesis. Functionally, cell wall formation. Catalyzes the transfer of a GlcNAc subunit on undecaprenyl-pyrophosphoryl-MurNAc-pentapeptide (lipid intermediate I) to form undecaprenyl-pyrophosphoryl-MurNAc-(pentapeptide)GlcNAc (lipid intermediate II). In Acidithiobacillus ferrooxidans (strain ATCC 23270 / DSM 14882 / CIP 104768 / NCIMB 8455) (Ferrobacillus ferrooxidans (strain ATCC 23270)), this protein is UDP-N-acetylglucosamine--N-acetylmuramyl-(pentapeptide) pyrophosphoryl-undecaprenol N-acetylglucosamine transferase.